The chain runs to 510 residues: Putative glycerol-3-phosphate transporter 3 (510 aa).

12 helical membrane passes run 31 to 51 (LSFK…YIAF), 91 to 111 (ALLG…MFVA), 123 to 143 (FLTI…VAFW), 158 to 178 (LAGW…GNWF), 185 to 205 (VIMG…TLIA), 217 to 237 (FVGP…FLPV), 279 to 299 (VGFL…CLFF), 331 to 351 (GNLS…AGYF), 355 to 375 (LDGR…ALFL), 378 to 398 (IYGH…GLFV), 436 to 456 (TGSV…AISW), and 459 to 479 (VFYM…TLII).

Belongs to the major facilitator superfamily. Organophosphate:Pi antiporter (OPA) (TC 2.A.1.4) family.

The protein localises to the membrane. This is Putative glycerol-3-phosphate transporter 3 from Arabidopsis thaliana (Mouse-ear cress).